The sequence spans 239 residues: tRNA (guanine-N(1)-)-methyltransferase (239 aa).

Residues glycine 108 and 127–132 contribute to the S-adenosyl-L-methionine site; that span reads LGDYVL.

It belongs to the RNA methyltransferase TrmD family. Homodimer.

The protein resides in the cytoplasm. The enzyme catalyses guanosine(37) in tRNA + S-adenosyl-L-methionine = N(1)-methylguanosine(37) in tRNA + S-adenosyl-L-homocysteine + H(+). Its function is as follows. Specifically methylates guanosine-37 in various tRNAs. The polypeptide is tRNA (guanine-N(1)-)-methyltransferase (Streptococcus pneumoniae (strain P1031)).